Consider the following 297-residue polypeptide: Palmitoyl-protein thioesterase ABHD10, mitochondrial (297 aa).

The transit peptide at 1–43 (MAAWVPCRKWGWAAVSFGRHRGLIASLARKPPWAWWLSACRQK) directs the protein to the mitochondrion. An AB hydrolase-1 domain is found at 69–181 (IIFIPGYLSN…GVVTQFHSLP (113 aa)). Residues Ser143, Asp240, and His270 each act as charge relay system in the active site.

Belongs to the AB hydrolase superfamily. As to expression, expressed in epididymal sperm but not in testicular sperm (at protein level).

It localises to the mitochondrion. It catalyses the reaction S-hexadecanoyl-L-cysteinyl-[protein] + H2O = L-cysteinyl-[protein] + hexadecanoate + H(+). It carries out the reaction mycophenolic acid O-acyl-beta-D-glucuronide + H2O = mycophenolate + D-glucuronate + H(+). Inhibited by palmostatin-B. Functionally, acts as an acyl-protein thioesterase that hydrolyzes fatty acids from acylated residues in proteins. Regulates the mitochondrial S-depalmitoylation of the nucleophilic active site residue of peroxiredoxin-5/PRDX5, a key antioxidant protein, therefore modulating mitochondrial antioxidant ability. Also catalyzes the deglucuronidation of mycophenolic acid acyl-glucuronide, an active metabolite of the immunosuppressant drug mycophenolate. This Rattus norvegicus (Rat) protein is Palmitoyl-protein thioesterase ABHD10, mitochondrial.